Here is a 937-residue protein sequence, read N- to C-terminus: Inactive tyrosine-protein kinase transmembrane receptor ROR1 (937 aa).

The N-terminal stretch at Met-1–Ala-29 is a signal peptide. Topologically, residues Gln-30 to Tyr-406 are extracellular. The Ig-like C2-type domain occupies Pro-42–Ser-141. N-linked (GlcNAc...) asparagine glycosylation is found at Asn-47 and Asn-66. 9 disulfides stabilise this stretch: Cys-79-Cys-131, Cys-170-Cys-235, Cys-178-Cys-228, Cys-219-Cys-260, Cys-248-Cys-296, Cys-252-Cys-282, Cys-313-Cys-391, Cys-334-Cys-374, and Cys-362-Cys-386. Residues Glu-165 to Ile-299 enclose the FZ domain. The N-linked (GlcNAc...) asparagine glycan is linked to Asn-184. In terms of domain architecture, Kringle spans Lys-312 to Cys-391. N-linked (GlcNAc...) asparagine glycosylation occurs at Asn-315. The chain crosses the membrane as a helical span at residues Ile-407 to Val-427. Residues Cys-428 to Val-937 lie on the Cytoplasmic side of the membrane. Positions Val-473–Leu-746 constitute a Protein kinase domain. Residues Leu-479–Ile-487 and Lys-506 contribute to the ATP site. Residue Tyr-645 is modified to Phosphotyrosine; by autocatalysis. Residues Ser-753 to Ser-762 show a composition bias toward low complexity. Disordered stretches follow at residues Ser-753–Val-778, Gly-840–Ile-890, and Gln-916–Val-937. The segment covering Gly-763–Val-778 has biased composition (polar residues). Low complexity predominate over residues Arg-854–Ser-864. Positions Thr-865–Ala-880 are enriched in polar residues.

It belongs to the protein kinase superfamily. Tyr protein kinase family. ROR subfamily. In terms of assembly, interacts with ERBB2 and IGFBP5. As to expression, at postnatal P0, expressed in heart, lung, liver, kidney, spleen and inner ear.

It localises to the membrane. It is found in the cell projection. Its subcellular location is the axon. Functionally, has very low kinase activity in vitro and is unlikely to function as a tyrosine kinase in vivo. Receptor for ligand WNT5A which activate downstream NFkB signaling pathway and may result in the inhibition of WNT3A-mediated signaling. In inner ear, crucial for spiral ganglion neurons to innervate auditory hair cells. Via IGFBP5 ligand, forms a complex with ERBB2 to enhance CREB oncogenic signaling. The protein is Inactive tyrosine-protein kinase transmembrane receptor ROR1 (Ror1) of Mus musculus (Mouse).